A 276-amino-acid polypeptide reads, in one-letter code: MTWNATLALDYTRQAGKTVAHFRHSGPLRILQSLYPEGDAICHNVIVHPPGGLVGGDTLDLQFSASAGAHGLITTPGATRFYRSTGEPALQRTHLTLEAGARMEWLPLEAICYSGCLAENHLTMTLAPGAELIGWDITALGLPAASLPFAHGSFCQHIEVPGVWLERARIQASDTLLMSSPLGMAGHRCVASLFFVAGSKLDRHRRQQALDTARQIIEAHPLSATAGATSPDGQVVVVRVLAPVVEPAMALLRQVWLAWRSHFWQQAASSPRIWSM.

The protein belongs to the UreD family. As to quaternary structure, ureD, UreF and UreG form a complex that acts as a GTP-hydrolysis-dependent molecular chaperone, activating the urease apoprotein by helping to assemble the nickel containing metallocenter of UreC. The UreE protein probably delivers the nickel.

Its subcellular location is the cytoplasm. Its function is as follows. Required for maturation of urease via the functional incorporation of the urease nickel metallocenter. The chain is Urease accessory protein UreD from Polaromonas sp. (strain JS666 / ATCC BAA-500).